Here is a 696-residue protein sequence, read N- to C-terminus: Methionine--tRNA ligase (696 aa).

A 'HIGH' region motif is present at residues 12-22 (PYANGAIHLGH). Zn(2+) contacts are provided by Cys-143, Cys-146, Cys-156, and Cys-159. The 'KMSKS' region signature appears at 336-340 (KMSKS). Residue Lys-339 coordinates ATP. The segment at 556-580 (SLAPAPEAQSQQRHAEHQQNEVTAE) is disordered. Positions 591 to 696 (DFMKVDLRIV…SGAQPGMRVK (106 aa)) constitute a tRNA-binding domain.

It belongs to the class-I aminoacyl-tRNA synthetase family. MetG type 1 subfamily. As to quaternary structure, homodimer. Zn(2+) serves as cofactor.

It is found in the cytoplasm. It carries out the reaction tRNA(Met) + L-methionine + ATP = L-methionyl-tRNA(Met) + AMP + diphosphate. Its function is as follows. Is required not only for elongation of protein synthesis but also for the initiation of all mRNA translation through initiator tRNA(fMet) aminoacylation. This chain is Methionine--tRNA ligase, found in Dechloromonas aromatica (strain RCB).